The following is a 324-amino-acid chain: MHLQQLVVSWFSLVWLASPIVAIWELEKNVYVVELDWYPNAPGEMVVLTCNTPEEDGITWTSDQSSEVLGTGKTLTIHVKEFGDAGQYTCRKGGAVLSQSLLLLHKKEDGIWSTDILKDQKEPKNKSFLKCEAKNYSGRFTCWWLTAISTDLKFSVKSSRGSTDPRGVTCGTATLSEDLGEYKKYRVECQEGSACPAAEESLPIEVVLEAVHKLKYENYTSSFFIRDIIKPDPPKNLQLNPLKNSRHVEISWEYPDTWSTPHSYFSLMFGVQVQGKNKREKKDKLFTDQISAKVTCHKDANIRVQARDRYYSSSWSEWASVSCN.

Residues 1 to 22 (MHLQQLVVSWFSLVWLASPIVA) form the signal peptide. Residues 23–106 (IWELEKNVYV…LSQSLLLLHK (84 aa)) form the Ig-like C2-type domain. Residues cysteine 50 and cysteine 90 are joined by a disulfide bond. N-linked (GlcNAc...) asparagine glycans are attached at residues asparagine 125, asparagine 135, and asparagine 218. The region spanning 233–324 (PPKNLQLNPL…WSEWASVSCN (92 aa)) is the Fibronectin type-III domain.

The protein belongs to the IL-12B family. Heterodimer with IL12A; disulfide-linked. The heterodimer is known as interleukin IL-12. Heterodimer with IL23A; disulfide-linked. The heterodimer is known as interleukin IL-23. Also secreted as a monomer. Interacts with NBR1; this interaction promotes IL-12 secretion.

It is found in the secreted. Its function is as follows. Cytokine that can act as a growth factor for activated T and NK cells, enhance the lytic activity of NK/lymphokine-activated killer cells, and stimulate the production of IFN-gamma by resting PBMC. Functionally, associates with IL23A to form the IL-23 interleukin, a heterodimeric cytokine which functions in innate and adaptive immunity. IL-23 may constitute with IL-17 an acute response to infection in peripheral tissues. IL-23 binds to a heterodimeric receptor complex composed of IL12RB1 and IL23R, activates the Jak-Stat signaling cascade, stimulates memory rather than naive T-cells and promotes production of pro-inflammatory cytokines. IL-23 induces autoimmune inflammation and thus may be responsible for autoimmune inflammatory diseases and may be important for tumorigenesis. This Sus scrofa (Pig) protein is Interleukin-12 subunit beta (IL12B).